Reading from the N-terminus, the 447-residue chain is Asparagine--tRNA ligase (447 aa).

It belongs to the class-II aminoacyl-tRNA synthetase family. In terms of assembly, homodimer.

It is found in the cytoplasm. It carries out the reaction tRNA(Asn) + L-asparagine + ATP = L-asparaginyl-tRNA(Asn) + AMP + diphosphate + H(+). The protein is Asparagine--tRNA ligase of Mycoplasma mobile (strain ATCC 43663 / 163K / NCTC 11711) (Mesomycoplasma mobile).